A 399-amino-acid chain; its full sequence is Formate-dependent phosphoribosylglycinamide formyltransferase (399 aa).

N(1)-(5-phospho-beta-D-ribosyl)glycinamide is bound by residues 8 to 9 (EL) and Glu-68. Residues Arg-100, Lys-141, 146–151 (SSGHGQ), 185–188 (EALA), and Glu-193 contribute to the ATP site. The ATP-grasp domain maps to 105 to 308 (VLAHEELGLP…EFALHARAIL (204 aa)). Mg(2+)-binding residues include Glu-266 and Glu-279. N(1)-(5-phospho-beta-D-ribosyl)glycinamide contacts are provided by residues Asp-286, Lys-361, and 368 to 369 (RR).

This sequence belongs to the PurK/PurT family. Homodimer.

The catalysed reaction is N(1)-(5-phospho-beta-D-ribosyl)glycinamide + formate + ATP = N(2)-formyl-N(1)-(5-phospho-beta-D-ribosyl)glycinamide + ADP + phosphate + H(+). It functions in the pathway purine metabolism; IMP biosynthesis via de novo pathway; N(2)-formyl-N(1)-(5-phospho-D-ribosyl)glycinamide from N(1)-(5-phospho-D-ribosyl)glycinamide (formate route): step 1/1. Functionally, involved in the de novo purine biosynthesis. Catalyzes the transfer of formate to 5-phospho-ribosyl-glycinamide (GAR), producing 5-phospho-ribosyl-N-formylglycinamide (FGAR). Formate is provided by PurU via hydrolysis of 10-formyl-tetrahydrofolate. The chain is Formate-dependent phosphoribosylglycinamide formyltransferase from Bifidobacterium adolescentis (strain ATCC 15703 / DSM 20083 / NCTC 11814 / E194a).